Here is a 148-residue protein sequence, read N- to C-terminus: Large ribosomal subunit protein bL9 (148 aa).

This sequence belongs to the bacterial ribosomal protein bL9 family.

Binds to the 23S rRNA. This chain is Large ribosomal subunit protein bL9, found in Finegoldia magna (strain ATCC 29328 / DSM 20472 / WAL 2508) (Peptostreptococcus magnus).